We begin with the raw amino-acid sequence, 79 residues long: Putative defensin-like protein 137 (79 aa).

The signal sequence occupies residues 1–24; that stretch reads MKKYFQPSFVILIIFTVLVLGVVG. Disulfide bonds link C33-C78, C42-C62, C47-C72, and C51-C74.

The protein belongs to the DEFL family.

Its subcellular location is the secreted. The protein is Putative defensin-like protein 137 (LCR14) of Arabidopsis thaliana (Mouse-ear cress).